The primary structure comprises 107 residues: Large ribosomal subunit protein uL24 (107 aa).

Belongs to the universal ribosomal protein uL24 family. Part of the 50S ribosomal subunit.

Its function is as follows. One of two assembly initiator proteins, it binds directly to the 5'-end of the 23S rRNA, where it nucleates assembly of the 50S subunit. In terms of biological role, one of the proteins that surrounds the polypeptide exit tunnel on the outside of the subunit. This is Large ribosomal subunit protein uL24 from Caldanaerobacter subterraneus subsp. tengcongensis (strain DSM 15242 / JCM 11007 / NBRC 100824 / MB4) (Thermoanaerobacter tengcongensis).